The sequence spans 454 residues: Elongation factor Tu, mitochondrial (454 aa).

Residues 1-51 (MASVVLRNPSSKRLVPFSSQIYSRCGASVTSSYSISHSIGGDDLSSSTFGT) constitute a mitochondrion transit peptide. A tr-type G domain is found at 65–261 (KPHVNVGTIG…AVDEYIPDPV (197 aa)). Residues 74–81 (GHVDHGKT) are G1. 74–81 (GHVDHGKT) provides a ligand contact to GTP. The residue at position 82 (T82) is a Phosphothreonine. Residues 115–119 (GITIA) are G2. Positions 136-139 (DCPG) are G3. GTP is bound by residues 136–140 (DCPGH) and 191–194 (NKVD). Positions 191-194 (NKVD) are G4. The G5 stretch occupies residues 229 to 231 (SAL).

It belongs to the TRAFAC class translation factor GTPase superfamily. Classic translation factor GTPase family. EF-Tu/EF-1A subfamily.

Its subcellular location is the mitochondrion. In terms of biological role, this protein promotes the GTP-dependent binding of aminoacyl-tRNA to the A-site of ribosomes during protein biosynthesis. The polypeptide is Elongation factor Tu, mitochondrial (TUFA) (Arabidopsis thaliana (Mouse-ear cress)).